The primary structure comprises 570 residues: Methionine--tRNA ligase (570 aa).

The 'HIGH' region motif lies at 11-21; sequence PYVQTVPHLGN. Residues C143, C146, C156, and C159 each contribute to the Zn(2+) site. A 'KMSKS' region motif is present at residues 333-337; sequence KFSKS. K336 contacts ATP.

The protein belongs to the class-I aminoacyl-tRNA synthetase family. MetG type 1 subfamily. Requires Zn(2+) as cofactor.

It is found in the cytoplasm. It catalyses the reaction tRNA(Met) + L-methionine + ATP = L-methionyl-tRNA(Met) + AMP + diphosphate. Its function is as follows. Is required not only for elongation of protein synthesis but also for the initiation of all mRNA translation through initiator tRNA(fMet) aminoacylation. This chain is Methionine--tRNA ligase, found in Pyrobaculum arsenaticum (strain DSM 13514 / JCM 11321 / PZ6).